The chain runs to 78 residues: Exodeoxyribonuclease 7 small subunit (78 aa).

It belongs to the XseB family. In terms of assembly, heterooligomer composed of large and small subunits.

Its subcellular location is the cytoplasm. It carries out the reaction Exonucleolytic cleavage in either 5'- to 3'- or 3'- to 5'-direction to yield nucleoside 5'-phosphates.. Its function is as follows. Bidirectionally degrades single-stranded DNA into large acid-insoluble oligonucleotides, which are then degraded further into small acid-soluble oligonucleotides. The sequence is that of Exodeoxyribonuclease 7 small subunit from Synechococcus sp. (strain JA-2-3B'a(2-13)) (Cyanobacteria bacterium Yellowstone B-Prime).